The sequence spans 632 residues: MKPTNEPKKPFFQSPIILAVLGGILLIFFLRSFNSDGSFSDNFLASSTKNVSYHEIKQLISNNEVENVSIGQTLIKASHKEGNNRVIYIAKRVPDLTLVPLLDEKKINYSGFSESNFFTDMLGWLMPILVILGLWMFMANRMQKNMGGGIFGMGSAKKLINAEKPNVRFNDMAGNEEAKEEVVEIVDFLKYPERYANLGAKIPKGVLLVGPPGTGKTLLAKAVAGEAHVPFFSMGGSSFIEMFVGLGASRVRDLFETAKKQAPSIIFIDEIDAIGKSRAAGGVVSGNDEREQTLNQLLAEMDGFGSENAPVIVLAATNRPEILDPALMRPGRFDRQVLVDKPDFNGRVEILKVHIKGVKLANDVNLQEVAKLTAGLAGADLANIINEAALLAGRNNQKEVRQQHLKEAVERGIAGLEKKSRRISPKEKKIVAYHESGHAVISEMTKGSARVNKVSIIPRGMAALGYTLNTPEENKYLMQKHELIAEIDVLLGGRAAEDVFLEEISTGASNDLERATDIIKGMVSYYGMSSVSGLMVLEKQRNAFLGGGYGSSREFSEKTAEEMDLFIKNLLEERYKHVKQTLSDYREAIEIMVKELFDKEVITGERVREIISEYEVANNLESRLIPLEEQAS.

The Cytoplasmic segment spans residues 1 to 9; it reads MKPTNEPKK. The chain crosses the membrane as a helical span at residues 10–30; it reads PFFQSPIILAVLGGILLIFFL. Topologically, residues 31-116 are periplasmic; sequence RSFNSDGSFS…INYSGFSESN (86 aa). The chain crosses the membrane as a helical span at residues 117–137; sequence FFTDMLGWLMPILVILGLWMF. Residues 138-632 lie on the Cytoplasmic side of the membrane; the sequence is MANRMQKNMG…RLIPLEEQAS (495 aa). ATP contacts are provided by residues A173, 213–217, and H354; that span reads GTGKT. Zn(2+) is bound at residue H434. E435 is an active-site residue. Positions 438 and 511 each coordinate Zn(2+).

In the central section; belongs to the AAA ATPase family. It in the C-terminal section; belongs to the peptidase M41 family. Homohexamer. It depends on Zn(2+) as a cofactor.

It is found in the cell inner membrane. In terms of biological role, acts as a processive, ATP-dependent zinc metallopeptidase for both cytoplasmic and membrane proteins. Plays a role in the quality control of integral membrane proteins. The polypeptide is ATP-dependent zinc metalloprotease FtsH (Helicobacter pylori (strain ATCC 700392 / 26695) (Campylobacter pylori)).